The primary structure comprises 805 residues: Transcription factor E2f1 (805 aa).

Disordered regions lie at residues 9-45 (APINNSNSSSSHTTTSSNTQRHQQHQQHYGGSGTTGH), 119-208 (AAAA…LRHD), and 224-255 (PASHHPFSLSTPQQQLAASVASSSSSGDRNRA). Composition is skewed to low complexity over residues 12–37 (NNSNSSSSHTTTSSNTQRHQQHQQHY) and 119–134 (AAAAATAGHTQQQLQQ). Composition is skewed to polar residues over residues 144 to 154 (RKATGKSNDIT) and 181 to 195 (HHQTVYQKHTASSAP). The PIP-box K+4 motif motif lies at 147 to 161 (TGKSNDITNYYKVKR). Positions 240 to 249 (AASVASSSSS) are enriched in low complexity. A DNA-binding region spans residues 253-318 (NRADTSLGIL…KKSKNNIQWR (66 aa)). The tract at residues 318–411 (RCGQSMVSQE…LPNTKLPREI (94 aa)) is dimerization. Phosphoserine is present on serine 434. 2 disordered regions span residues 578–650 (SLTE…QRRS) and 714–743 (GAGANADPHQPYSHDRNSLPPGVADCDANS). 2 stretches are compositionally biased toward low complexity: residues 595-615 (AAAAIAAGSSTTATTTLNSHN) and 623-636 (SNHSNHSSSNNSKS). Over residues 637-647 (QPPTIGYGSSQ) the composition is skewed to polar residues.

This sequence belongs to the E2F/DP family. Heterodimer of E2f and Dp. Cooperates to give sequence-specific DNA binding and optimal trans-activation. Interacts with PCNA. In terms of processing, ubiquitinated by the DCX(DTL) complex, also named CRL4(CDT2) complex, leading to its degradation during S phase. Ubiquitination by the DCX(DTL) complex is essential for cell cycle control and is PCNA-dependent: interacts with PCNA via its PIP-box, while the presence of the containing the 'K+4' motif in the PIP box, recruit the DCX(DTL) complex, leading to its degradation. Segmentally repeated expression throughout early embryos is restricted to the ventral nerve cord in later embryos.

It localises to the nucleus. Its function is as follows. Transcriptional activator that binds to E2f sites. Required for wild-type growth in mitotic and polytene tissues, Contributes to the expression of replication genes at the G1-S transition and Cyclin E. Activates cell proliferation in wing imaginal disk, which requires expression of vg. This Drosophila melanogaster (Fruit fly) protein is Transcription factor E2f1.